Here is a 23-residue protein sequence, read N- to C-terminus: Acidic phospholipase A2 Ts-A5 (23 aa).

Requires Ca(2+) as cofactor. In terms of processing, contains 7 disulfide bonds. In terms of tissue distribution, expressed by the venom gland.

Its subcellular location is the secreted. The catalysed reaction is a 1,2-diacyl-sn-glycero-3-phosphocholine + H2O = a 1-acyl-sn-glycero-3-phosphocholine + a fatty acid + H(+). Functionally, snake venom phospholipase A2 (PLA2) that shows a moderate inhibition of ADP-induced human platelet aggregation when tested on platelet rich plasma. Exhibits high hydrolytic activities and prefers the anionic micelles (dPPC with deoxycholate) to the zwitterionic micelles (dPPC with Triton X-100). PLA2 catalyzes the calcium-dependent hydrolysis of the 2-acyl groups in 3-sn-phosphoglycerides. This chain is Acidic phospholipase A2 Ts-A5, found in Trimeresurus stejnegeri (Chinese green tree viper).